The chain runs to 409 residues: MASGKATGKTDAPAPVIKLGGPKPPKVGSSGNASWFQAIKAKKLNSHPPKFEGSGVPDNENLKTSQQHGYWRRQARFKPVKGGRKPVPDAWYFYYTGTGPAADLNWGDSQDGIVWVAAKGADVKSRSHQGTRDPDKFDQYPLRFSDGGPDGNFRWDFIPLNRGRSGRSTAASSAASSRAPSRDGSRGRRSGSEDDLIARAAKIIQDQQKKGSRITKVKADEMAHRRYCKRTIPPGYKVDQVFGPRTKGKEGNFGDDKMNEEGIKDGRVTAMLNLVPSSHACLFGSRVTPKLQPDGLHLKFEFTTVVPRDDPQFDNYVKICDQCVDGVGTRPKDDEPRPKSRSSSRPATRTSSPAPRQQRPKKEKKPKKQDDEVDKALTSNEERNNAQLEFDEEPKVINWGDSALGENEL.

Disordered regions lie at residues 1-32, 45-69, 122-145, 164-194, and 238-259; these read MASGKATGKTDAPAPVIKLGGPKPPKVGSSGN, NSHPPKFEGSGVPDNENLKTSQQHG, DVKSRSHQGTRDPDKFDQYPLRFS, RSGRSTAASSAASSRAPSRDGSRGRRSGSED, and VDQVFGPRTKGKEGNFGDDKMN. Positions 15 to 31 are enriched in low complexity; it reads PVIKLGGPKPPKVGSSG. The interval 29–160 is RNA-binding; sequence SSGNASWFQA…GNFRWDFIPL (132 aa). One can recognise a CoV N NTD domain in the interval 31–156; that stretch reads GNASWFQAIK…GGPDGNFRWD (126 aa). Over residues 122–138 the composition is skewed to basic and acidic residues; that stretch reads DVKSRSHQGTRDPDKFD. Over residues 164-179 the composition is skewed to low complexity; the sequence is RSGRSTAASSAASSRA. Basic and acidic residues-rich tracts occupy residues 180 to 192 and 247 to 259; these read PSRDGSRGRRSGS and KGKEGNFGDDKMN. Phosphoserine; by host occurs at positions 190 and 192. Positions 219–331 constitute a CoV N CTD domain; it reads ADEMAHRRYC…QCVDGVGTRP (113 aa). The dimerization stretch occupies residues 226–333; it reads RYCKRTIPPG…VDGVGTRPKD (108 aa). Cysteine 320 and cysteine 323 are oxidised to a cystine. Residues 326 to 409 are disordered; the sequence is GVGTRPKDDE…GDSALGENEL (84 aa). Residues 341 to 357 are compositionally biased toward low complexity; sequence RSSSRPATRTSSPAPRQ. The span at 358–367 shows a compositional bias: basic residues; that stretch reads QRPKKEKKPK. Phosphothreonine; by host is present on threonine 378. The residue at position 379 (serine 379) is a Phosphoserine; by host.

It belongs to the gammacoronavirus nucleocapsid protein family. As to quaternary structure, homooligomer. Both monomeric and oligomeric forms interact with RNA. Interacts with protein M. Interacts with NSP3; this interaction serves to tether the genome to the newly translated replicase-transcriptase complex at a very early stage of infection. In terms of processing, ADP-ribosylated. The ADP-ribosylation is retained in the virion during infection. Post-translationally, phosphorylated on serine and threonine residues.

The protein resides in the virion. Its subcellular location is the host endoplasmic reticulum-Golgi intermediate compartment. It is found in the host Golgi apparatus. In terms of biological role, packages the positive strand viral genome RNA into a helical ribonucleocapsid (RNP) and plays a fundamental role during virion assembly through its interactions with the viral genome and membrane protein M. Plays an important role in enhancing the efficiency of subgenomic viral RNA transcription as well as viral replication. The polypeptide is Nucleoprotein (Avian infectious bronchitis virus (strain Arkansas 99) (IBV)).